A 301-amino-acid polypeptide reads, in one-letter code: Ribosomal RNA small subunit methyltransferase A (301 aa).

S-adenosyl-L-methionine contacts are provided by asparagine 29, leucine 31, glycine 56, glutamate 77, aspartate 102, and asparagine 127.

The protein belongs to the class I-like SAM-binding methyltransferase superfamily. rRNA adenine N(6)-methyltransferase family. RsmA subfamily.

The protein resides in the cytoplasm. The enzyme catalyses adenosine(1518)/adenosine(1519) in 16S rRNA + 4 S-adenosyl-L-methionine = N(6)-dimethyladenosine(1518)/N(6)-dimethyladenosine(1519) in 16S rRNA + 4 S-adenosyl-L-homocysteine + 4 H(+). In terms of biological role, specifically dimethylates two adjacent adenosines (A1518 and A1519) in the loop of a conserved hairpin near the 3'-end of 16S rRNA in the 30S particle. May play a critical role in biogenesis of 30S subunits. The sequence is that of Ribosomal RNA small subunit methyltransferase A from Halothermothrix orenii (strain H 168 / OCM 544 / DSM 9562).